A 199-amino-acid polypeptide reads, in one-letter code: Acireductone dioxygenase 1 (199 aa).

Fe(2+) contacts are provided by histidine 99, histidine 101, glutamate 105, and histidine 144. Ni(2+) contacts are provided by histidine 99, histidine 101, glutamate 105, and histidine 144.

It belongs to the acireductone dioxygenase (ARD) family. It depends on Fe(2+) as a cofactor. Ni(2+) is required as a cofactor.

It localises to the cytoplasm. Its subcellular location is the nucleus. The catalysed reaction is 1,2-dihydroxy-5-(methylsulfanyl)pent-1-en-3-one + O2 = 4-methylsulfanyl-2-oxobutanoate + formate + 2 H(+). It catalyses the reaction 1,2-dihydroxy-5-(methylsulfanyl)pent-1-en-3-one + O2 = 3-(methylsulfanyl)propanoate + CO + formate + 2 H(+). The protein operates within amino-acid biosynthesis; L-methionine biosynthesis via salvage pathway; L-methionine from S-methyl-5-thio-alpha-D-ribose 1-phosphate: step 5/6. Catalyzes 2 different reactions between oxygen and the acireductone 1,2-dihydroxy-3-keto-5-methylthiopentene (DHK-MTPene) depending upon the metal bound in the active site. Fe-containing acireductone dioxygenase (Fe-ARD) produces formate and 2-keto-4-methylthiobutyrate (KMTB), the alpha-ketoacid precursor of methionine in the methionine recycle pathway. Ni-containing acireductone dioxygenase (Ni-ARD) produces methylthiopropionate, carbon monoxide and formate, and does not lie on the methionine recycle pathway. The protein is Acireductone dioxygenase 1 (ARD1) of Oryza sativa subsp. indica (Rice).